Here is a 76-residue protein sequence, read N- to C-terminus: Omega-conotoxin-like TxMKLT1-0211 (76 aa).

Positions Met-1–Ala-22 are cleaved as a signal peptide. A propeptide spanning residues Val-23 to Arg-52 is cleaved from the precursor. 3 disulfides stabilise this stretch: Cys-53/Cys-67, Cys-60/Cys-71, and Cys-66/Cys-75.

It belongs to the conotoxin O1 superfamily. As to expression, expressed by the venom duct.

Its subcellular location is the secreted. In terms of biological role, omega-conotoxins act at presynaptic membranes, they bind and block voltage-gated calcium channels (Cav). This Conus textile (Cloth-of-gold cone) protein is Omega-conotoxin-like TxMKLT1-0211.